The following is a 201-amino-acid chain: MWISLCIGFLGLCSVLIGSCILFLHWKKNLQREERAQQWVEVMRAATFTYSPLLYWINKRRYHGMNVAINTGPPPAVTKTEPEDQNSDSLWELDLSEGRNFVVQDSSPRGEASDLLQHVLGIPKQPQSSKMSQPRTDSPFPLPIFQEVPFALSLCHLPPMLNHSVSYPLANRPERNVPFCSLPTLAHGTNCFNAKPFALEL.

A helical transmembrane segment spans residues isoleucine 3 to phenylalanine 23.

The protein localises to the membrane. This chain is Testis-expressed protein 38 (Tex38), found in Mus musculus (Mouse).